Reading from the N-terminus, the 419-residue chain is tRNA (guanine-N(7)-)-methyltransferase non-catalytic subunit wuho (419 aa).

The segment covering Ser-51–Glu-61 has biased composition (low complexity). Residues Ser-51–Asp-75 form a disordered region. 3 WD repeats span residues Ala-87–Val-127, Gly-174–Ser-213, and Gly-217–Arg-255.

The protein belongs to the WD repeat TRM82 family. In terms of assembly, forms a heterodimer with the catalytic subunit Mettl1. Interacts with mei-P26 and weakly interacts with bgcn; required for the function or formation of the mei-P26-bgcn-bam-sxl complex. Interacts with nanos; may be involved in mei-P26-dependent derepression of the BMP signaling pathway. Interacts with Myc; the interaction may be mediated by mei-P26 and may be involved in the regulation of ribosome biogenesis. In testis, it is present at high level in hub cells, a niche for germline stem cells of testis. Ubiquitously expressed in all testicular cells throughout spermatogenesis. Ubiquitously expressed in all germline and somatic cells of the ovary.

The protein localises to the nucleus. Its subcellular location is the cytoplasm. It participates in tRNA modification; N(7)-methylguanine-tRNA biosynthesis. Required for the Mettl1-dependent formation of N(7)-methylguanine at position 46 (m7G46) in tRNA. In the Mettl1-wuho methyltransferase complex, it is required to stabilize and induce conformational changes of the catalytic subunit. Required for binding of nanos mRNA and repression of translation by the mei-P26-bgcn-bam-sxl complex. May cooperate with mei-P26 and nanos to derepress the BMP signaling pathway. May cooperate with mei-P26 to suppress expression of a subset of microRNAs. May cooperate with mei-P26 to regulate bam expression levels in germline cells during gametogenesis. Required to promote mitosis to meiosis transition during gametogenesis. May regulate germline cell division in part by regulating ribosome biogenesis. The chain is tRNA (guanine-N(7)-)-methyltransferase non-catalytic subunit wuho from Drosophila willistoni (Fruit fly).